The sequence spans 429 residues: Threonine synthase (429 aa).

Residue Lys-108 is modified to N6-(pyridoxal phosphate)lysine.

It belongs to the threonine synthase family. It depends on pyridoxal 5'-phosphate as a cofactor.

The enzyme catalyses O-phospho-L-homoserine + H2O = L-threonine + phosphate. It functions in the pathway amino-acid biosynthesis; L-threonine biosynthesis; L-threonine from L-aspartate: step 5/5. Catalyzes the gamma-elimination of phosphate from L-phosphohomoserine and the beta-addition of water to produce L-threonine. This Buchnera aphidicola subsp. Acyrthosiphon pisum (strain APS) (Acyrthosiphon pisum symbiotic bacterium) protein is Threonine synthase (thrC).